Consider the following 620-residue polypeptide: GTP-binding protein At3g49725, chloroplastic (620 aa).

The N-terminal 65 residues, 1–65, are a transit peptide targeting the chloroplast; the sequence is MSVTTSFGIW…SSFLARDRLR (65 aa). Residues 57–100 are disordered; the sequence is SFLARDRLRSKTPSSSPFSSKRHTPKTSEIEEESTPKDSVLLNP. Positions 346–585 constitute a Hflx-type G domain; it reads GTIAVVGYTN…LIDDKMKEKK (240 aa). GTP is bound by residues 352–359, 377–381, 399–402, and 468–471; these read GYTNAGKS, FATLD, DTVG, and NKID. S359 and T379 together coordinate Mg(2+). Composition is skewed to acidic residues over residues 478–497 and 511–521; these read EEEK…EDEA and TVDEDQIQNGD. Positions 478 to 521 are disordered; that stretch reads EEEKYLDDGEGVGEEDEDEADLKAEETVDASEATVDEDQIQNGD. 563 to 565 is a binding site for GTP; that stretch reads SAL. A disordered region spans residues 597 to 620; sequence LHKRKWRPPRNDDEEERLIPLDQR.

This sequence belongs to the TRAFAC class OBG-HflX-like GTPase superfamily. HflX GTPase family. It depends on Mg(2+) as a cofactor.

The protein localises to the plastid. It is found in the chloroplast. The polypeptide is GTP-binding protein At3g49725, chloroplastic (Arabidopsis thaliana (Mouse-ear cress)).